The sequence spans 183 residues: Outer membrane protein H.8 (183 aa).

The first 17 residues, 1-17, serve as a signal peptide directing secretion; that stretch reads MKAYLALISAAVIGLAA. Cys18 carries the N-palmitoyl cysteine lipid modification. The S-diacylglycerol cysteine moiety is linked to residue Cys18. The disordered stretch occupies residues 27 to 51; it reads AEATPAGEAPASEAPAAEAAPADAA. A Plastocyanin-like domain is found at 57–183; the sequence is GNCAATVESN…LMNGKVTLVD (127 aa). 4 residues coordinate Cu cation: His102, Cys166, His171, and Met175.

It depends on Cu cation as a cofactor.

It is found in the cell outer membrane. The chain is Outer membrane protein H.8 from Neisseria gonorrhoeae.